Consider the following 474-residue polypeptide: tRNA modification GTPase MnmE (474 aa).

(6S)-5-formyl-5,6,7,8-tetrahydrofolate contacts are provided by Arg-35, Glu-92, and Lys-135. The 166-residue stretch at 231 to 396 (GLHVVLAGQP…LRAALLEIAG (166 aa)) folds into the TrmE-type G domain. Position 241 (Asn-241) interacts with K(+). GTP contacts are provided by residues 241 to 246 (NVGKSS), 260 to 266 (TPIAGTT), 285 to 288 (DTAG), and 377 to 379 (SAR). Ser-245 contributes to the Mg(2+) binding site. K(+) is bound by residues Thr-260, Ile-262, and Thr-265. Thr-266 provides a ligand contact to Mg(2+). Residue Lys-474 coordinates (6S)-5-formyl-5,6,7,8-tetrahydrofolate.

This sequence belongs to the TRAFAC class TrmE-Era-EngA-EngB-Septin-like GTPase superfamily. TrmE GTPase family. Homodimer. Heterotetramer of two MnmE and two MnmG subunits. The cofactor is K(+).

It is found in the cytoplasm. Its function is as follows. Exhibits a very high intrinsic GTPase hydrolysis rate. Involved in the addition of a carboxymethylaminomethyl (cmnm) group at the wobble position (U34) of certain tRNAs, forming tRNA-cmnm(5)s(2)U34. The protein is tRNA modification GTPase MnmE of Ralstonia nicotianae (strain ATCC BAA-1114 / GMI1000) (Ralstonia solanacearum).